Here is a 262-residue protein sequence, read N- to C-terminus: Nitrate transport protein NasD (262 aa).

The ABC transporter domain maps to 5 to 239; it reads IQVQGVSQRF…RPRNRVQLAD (235 aa). 41–48 is a binding site for ATP; that stretch reads GHSGCGKS.

It belongs to the ABC transporter superfamily.

It localises to the cell membrane. In terms of biological role, probably part of a high-affinity binding-protein-dependent transport system for nitrate. Probably responsible for energy coupling to the transport system. The chain is Nitrate transport protein NasD (nasD) from Klebsiella oxytoca.